A 314-amino-acid chain; its full sequence is CBASS oligonucleotide cyclase CdnC (314 aa).

Lys60 contacts ATP. Mg(2+) contacts are provided by Asp73 and Asp75. ATP contacts are provided by residues Asp75, Lys186, 197–199 (KSF), and Asn263.

Belongs to the CD-NTase family. C01 subfamily. As to quaternary structure, forms complexes with Cap7 with 1:1 and 2:2 stoichimetry, and a 1:1:6 CdnC:Cap7:Cap6 complex. Mg(2+) serves as cofactor.

Functionally, cyclic nucleotide synthase (second messenger synthase) of a CBASS antivirus system. CBASS (cyclic oligonucleotide-based antiphage signaling system) provides immunity against bacteriophage. The CD-NTase protein synthesizes cyclic nucleotides in response to infection; these serve as specific second messenger signals. The signals activate a diverse range of effectors, leading to bacterial cell death and thus abortive phage infection. A type III CBASS system. Expression of this CBASS system (Cap18-Cap6-Cap7-CdnC-CapW-Cap17) in a susceptible E.coli (strain MG1655) confers resistance to bacteriophage P1. Probable cyclic nucleotide synthase that upon activation catalyzes the synthesis of a cyclic nucleotide. A cyclase activity for this enzyme was not identified in. This chain is CBASS oligonucleotide cyclase CdnC, found in Escherichia coli (strain KTE188).